The primary structure comprises 795 residues: Protocadherin beta-12 (795 aa).

The signal sequence occupies residues 1–26; it reads MENGGAGTLQIRQVLLFFVLLGMSQA. Over 27-690 the chain is Extracellular; it reads GSETGNFLVM…AQADSLTVYL (664 aa). 5 Cadherin domains span residues 35 to 133, 138 to 242, 247 to 347, 352 to 451, and 456 to 561; these read VMEE…SPVF, MLLE…SPEF, YEVK…APEI, ITSP…APAF, and YALF…SPFV. N-linked (GlcNAc...) asparagine glycosylation is found at Asn-418, Asn-436, Asn-487, and Asn-567. The Cadherin 6 domain occupies 568 to 671; sequence GSAPCTELVP…LVDGFSQPYL (104 aa). Residues 691-711 traverse the membrane as a helical segment; the sequence is VVALASVSSLFLFSVLLFVAV. Over 712 to 795 the chain is Cytoplasmic; sequence RLCRRSRAAP…NPPFQNNLGF (84 aa).

It localises to the cell membrane. In terms of biological role, potential calcium-dependent cell-adhesion protein. May be involved in the establishment and maintenance of specific neuronal connections in the brain. The sequence is that of Protocadherin beta-12 (PCDHB12) from Homo sapiens (Human).